Reading from the N-terminus, the 276-residue chain is F420-dependent methylenetetrahydromethanopterin dehydrogenase (276 aa).

Belongs to the MTD family.

It carries out the reaction 5,10-methylenetetrahydromethanopterin + oxidized coenzyme F420-(gamma-L-Glu)(n) + 2 H(+) = 5,10-methenyl-5,6,7,8-tetrahydromethanopterin + reduced coenzyme F420-(gamma-L-Glu)(n). In terms of biological role, catalyzes the oxidation of methylene-H(4)MPT to methenyl-H(4)MPT(+). This is F420-dependent methylenetetrahydromethanopterin dehydrogenase from Methanosphaera stadtmanae (strain ATCC 43021 / DSM 3091 / JCM 11832 / MCB-3).